The following is a 358-amino-acid chain: Alternative oxidase, mitochondrial (358 aa).

A helical transmembrane segment spans residues 152–172; the sequence is LIRMVFLESVAGVPGMVAGML. Residues glutamate 159, glutamate 198, and histidine 201 each coordinate Fe cation. The chain crosses the membrane as a helical span at residues 217–237; the sequence is FMIIGAQGVFFNSMFLSYLIS. 4 residues coordinate Fe cation: glutamate 249, glutamate 250, glutamate 306, and histidine 309.

Belongs to the alternative oxidase family. Fe cation is required as a cofactor.

It is found in the mitochondrion inner membrane. Functionally, catalyzes cyanide-resistant oxygen consumption. May increase respiration when the cytochrome respiratory pathway is restricted, or in response to low temperatures. This chain is Alternative oxidase, mitochondrial, found in Blumeria graminis (Powdery mildew).